The primary structure comprises 144 residues: D-aminoacyl-tRNA deacylase (144 aa).

The Gly-cisPro motif, important for rejection of L-amino acids motif lies at 136-137 (GP).

It belongs to the DTD family. In terms of assembly, homodimer.

Its subcellular location is the cytoplasm. It catalyses the reaction glycyl-tRNA(Ala) + H2O = tRNA(Ala) + glycine + H(+). The catalysed reaction is a D-aminoacyl-tRNA + H2O = a tRNA + a D-alpha-amino acid + H(+). In terms of biological role, an aminoacyl-tRNA editing enzyme that deacylates mischarged D-aminoacyl-tRNAs. Also deacylates mischarged glycyl-tRNA(Ala), protecting cells against glycine mischarging by AlaRS. Acts via tRNA-based rather than protein-based catalysis; rejects L-amino acids rather than detecting D-amino acids in the active site. By recycling D-aminoacyl-tRNA to D-amino acids and free tRNA molecules, this enzyme counteracts the toxicity associated with the formation of D-aminoacyl-tRNA entities in vivo and helps enforce protein L-homochirality. The protein is D-aminoacyl-tRNA deacylase of Aliivibrio fischeri (strain MJ11) (Vibrio fischeri).